Here is a 269-residue protein sequence, read N- to C-terminus: 5'-nucleotidase SurE (269 aa).

Positions 8, 9, 40, and 93 each coordinate a divalent metal cation.

The protein belongs to the SurE nucleotidase family. Requires a divalent metal cation as cofactor.

It is found in the cytoplasm. The catalysed reaction is a ribonucleoside 5'-phosphate + H2O = a ribonucleoside + phosphate. Functionally, nucleotidase that shows phosphatase activity on nucleoside 5'-monophosphates. The protein is 5'-nucleotidase SurE of Caulobacter sp. (strain K31).